We begin with the raw amino-acid sequence, 344 residues long: tRNA-specific 2-thiouridylase MnmA (344 aa).

ATP is bound by residues 9-16 and methionine 34; that span reads AMSGGVDS. Cysteine 92 (nucleophile) is an active-site residue. An intrachain disulfide couples cysteine 92 to cysteine 188. Position 116 (glycine 116) interacts with ATP. Positions 138–140 are interaction with tRNA; it reads KDQ. Cysteine 188 acts as the Cysteine persulfide intermediate in catalysis.

This sequence belongs to the MnmA/TRMU family.

It localises to the cytoplasm. It catalyses the reaction S-sulfanyl-L-cysteinyl-[protein] + uridine(34) in tRNA + AH2 + ATP = 2-thiouridine(34) in tRNA + L-cysteinyl-[protein] + A + AMP + diphosphate + H(+). Functionally, catalyzes the 2-thiolation of uridine at the wobble position (U34) of tRNA, leading to the formation of s(2)U34. This chain is tRNA-specific 2-thiouridylase MnmA, found in Desulfotalea psychrophila (strain LSv54 / DSM 12343).